Here is a 521-residue protein sequence, read N- to C-terminus: Protein nucleotidyltransferase YdiU (521 aa).

Residues Gly109, Gly111, Arg112, Lys131, Asp143, Gly144, Arg194, and Arg201 each coordinate ATP. Catalysis depends on Asp270, which acts as the Proton acceptor. 2 residues coordinate Mg(2+): Asn271 and Asp280. An ATP-binding site is contributed by Asp280.

It belongs to the SELO family. It depends on Mg(2+) as a cofactor. Mn(2+) is required as a cofactor.

It carries out the reaction L-seryl-[protein] + ATP = 3-O-(5'-adenylyl)-L-seryl-[protein] + diphosphate. It catalyses the reaction L-threonyl-[protein] + ATP = 3-O-(5'-adenylyl)-L-threonyl-[protein] + diphosphate. The catalysed reaction is L-tyrosyl-[protein] + ATP = O-(5'-adenylyl)-L-tyrosyl-[protein] + diphosphate. The enzyme catalyses L-histidyl-[protein] + UTP = N(tele)-(5'-uridylyl)-L-histidyl-[protein] + diphosphate. It carries out the reaction L-seryl-[protein] + UTP = O-(5'-uridylyl)-L-seryl-[protein] + diphosphate. It catalyses the reaction L-tyrosyl-[protein] + UTP = O-(5'-uridylyl)-L-tyrosyl-[protein] + diphosphate. Functionally, nucleotidyltransferase involved in the post-translational modification of proteins. It can catalyze the addition of adenosine monophosphate (AMP) or uridine monophosphate (UMP) to a protein, resulting in modifications known as AMPylation and UMPylation. The protein is Protein nucleotidyltransferase YdiU of Burkholderia thailandensis (strain ATCC 700388 / DSM 13276 / CCUG 48851 / CIP 106301 / E264).